The following is a 189-amino-acid chain: Glucose-6-phosphate isomerase (189 aa).

Residues His-88, His-90, Glu-97, and His-136 each coordinate Fe cation.

The protein belongs to the archaeal-type GPI family. In terms of assembly, homodimer. It depends on Fe cation as a cofactor.

Its subcellular location is the cytoplasm. It carries out the reaction alpha-D-glucose 6-phosphate = beta-D-fructose 6-phosphate. Its pathway is carbohydrate degradation; glycolysis; D-glyceraldehyde 3-phosphate and glycerone phosphate from D-glucose: step 2/4. Its activity is regulated as follows. Inhibited by mannose 6-phosphate, fructose 1-phosphate and fructose 1,6-bisphosphate. This is Glucose-6-phosphate isomerase (pgiA) from Pyrococcus furiosus (strain ATCC 43587 / DSM 3638 / JCM 8422 / Vc1).